An 878-amino-acid polypeptide reads, in one-letter code: Serine/threonine-protein kinase D2 (878 aa).

Positions 1–12 (MATAPSYPAGLP) are enriched in low complexity. The interval 1-35 (MATAPSYPAGLPGSPGPGSPPPPGGLELQSPPPLL) is disordered. Residues 14–35 (SPGPGSPPPPGGLELQSPPPLL) show a composition bias toward pro residues. Position 30 is a phosphoserine (S30). Y87 carries the post-translational modification Phosphotyrosine. The Phorbol-ester/DAG-type 1 zinc finger occupies 138–188 (PHALTVHSYRAPAFCDHCGEMLFGLVRQGLKCDGCGLNYHKRCAFSIPNNC). Phosphoserine occurs at positions 197, 198, 200, 203, 206, 212, and 214. The disordered stretch occupies residues 224–247 (RSTTELLPRRPPSSSSSSSASSYT). The span at 236 to 245 (SSSSSSSASS) shows a compositional bias: low complexity. S244 is subject to Phosphoserine; by CSNK1D and CSNK1E. A Phorbol-ester/DAG-type 2 zinc finger spans residues 264–314 (PHTFLIHSYTRPTVCQACKKLLKGLFRQGLQCKDCKFNCHKRCATRVPNDC). A disordered region spans residues 343–373 (ESEDSGVIPGSHSENALHASEEEEGEGGKAQ). The PH domain maps to 397-509 (TTLREGWVVH…WETAIRQALM (113 aa)). Y407 is subject to Phosphotyrosine. Y438 is subject to Phosphotyrosine; by ABL1. S518 carries the phosphoserine modification. Residues 551–807 (IFPDEVLGSG…VDKSLSHPWL (257 aa)) enclose the Protein kinase domain. ATP is bound by residues 557 to 565 (LGSGQFGVV) and K580. The Proton acceptor role is filled by D674. A Phosphoserine; by PKC modification is found at S706. At S710 the chain carries Phosphoserine. Phosphotyrosine; by ABL1 is present on Y717. The short motif at 724 to 726 (LNQ) is the Important for ABL1-mediated Tyr-717 phosphorylation element. Residues 844-869 (HPLPGSGLPTDRDLGGACPPQDHDMQ) form a disordered region. S876 is modified (phosphoserine; by autocatalysis).

This sequence belongs to the protein kinase superfamily. CAMK Ser/Thr protein kinase family. PKD subfamily. As to quaternary structure, interacts (via C-terminus) with LCK. Interacts (via N-terminal AP-rich region) with CIB1 isoform 2. Interacts (via N-terminus and zing-finger domain 1 and 2) with PRKCD in response to oxidative stress; the interaction is independent of PRKD2 tyrosine phosphorylation. It depends on Mg(2+) as a cofactor. Phosphorylation of Ser-876 correlates with the activation status of the kinase. Ser-706 or/and Ser-710 are probably phosphorylated by PKC. Phosphorylation at Ser-244 by CSNK1D and CSNK1E promotes nuclear localization and substrate targeting. Phosphorylation at Ser-244, Ser-706 and Ser-710 is required for nuclear localization. Phosphorylated at Tyr-438 by ABL1 in response to oxidative stress. Phosphorylated at Tyr-717 by ABL1 specifically in response to oxidative stress; requires prior phosphorylation at Ser-706 or/and Ser-710. Widely expressed.

The protein localises to the cytoplasm. It localises to the cell membrane. The protein resides in the nucleus. It is found in the golgi apparatus. Its subcellular location is the trans-Golgi network. It catalyses the reaction L-seryl-[protein] + ATP = O-phospho-L-seryl-[protein] + ADP + H(+). The catalysed reaction is L-threonyl-[protein] + ATP = O-phospho-L-threonyl-[protein] + ADP + H(+). With respect to regulation, activated by DAG and phorbol esters. Phorbol-ester/DAG-type domains bind DAG, mediating translocation to membranes. Autophosphorylation of Ser-710 and phosphorylation of Ser-706 by PKC relieves auto-inhibition by the PH domain. Catalytic activity is further increased by phosphorylation at Tyr-717 in response to oxidative stress. Functionally, serine/threonine-protein kinase that converts transient diacylglycerol (DAG) signals into prolonged physiological effects downstream of PKC, and is involved in the regulation of cell proliferation via MAPK1/3 (ERK1/2) signaling, oxidative stress-induced NF-kappa-B activation, inhibition of HDAC7 transcriptional repression, signaling downstream of T-cell antigen receptor (TCR) and cytokine production, and plays a role in Golgi membrane trafficking, angiogenesis, secretory granule release and cell adhesion. May potentiate mitogenesis induced by the neuropeptide bombesin by mediating an increase in the duration of MAPK1/3 (ERK1/2) signaling, which leads to accumulation of immediate-early gene products including FOS that stimulate cell cycle progression. In response to oxidative stress, is phosphorylated at Tyr-438 and Tyr-717 by ABL1, which leads to the activation of PRKD2 without increasing its catalytic activity, and mediates activation of NF-kappa-B. In response to the activation of the gastrin receptor CCKBR, is phosphorylated at Ser-244 by CSNK1D and CSNK1E, translocates to the nucleus, phosphorylates HDAC7, leading to nuclear export of HDAC7 and inhibition of HDAC7 transcriptional repression of NR4A1/NUR77. Upon TCR stimulation, is activated independently of ZAP70, translocates from the cytoplasm to the nucleus and is required for interleukin-2 (IL2) promoter up-regulation. During adaptive immune responses, is required in peripheral T-lymphocytes for the production of the effector cytokines IL2 and IFNG after TCR engagement and for optimal induction of antibody responses to antigens. In epithelial cells stimulated with lysophosphatidic acid (LPA), is activated through a PKC-dependent pathway and mediates LPA-stimulated interleukin-8 (IL8) secretion via a NF-kappa-B-dependent pathway. During TCR-induced T-cell activation, interacts with and is activated by the tyrosine kinase LCK, which results in the activation of the NFAT transcription factors. In the trans-Golgi network (TGN), regulates the fission of transport vesicles that are on their way to the plasma membrane and in polarized cells is involved in the transport of proteins from the TGN to the basolateral membrane. Plays an important role in endothelial cell proliferation and migration prior to angiogenesis, partly through modulation of the expression of KDR/VEGFR2 and FGFR1, two key growth factor receptors involved in angiogenesis. In secretory pathway, is required for the release of chromogranin-A (CHGA)-containing secretory granules from the TGN. Downstream of PRKCA, plays important roles in angiotensin-2-induced monocyte adhesion to endothelial cells. Plays a regulatory role in angiogenesis and tumor growth by phosphorylating a downstream mediator CIB1 isoform 2, resulting in vascular endothelial growth factor A (VEGFA) secretion. The chain is Serine/threonine-protein kinase D2 (PRKD2) from Homo sapiens (Human).